A 468-amino-acid chain; its full sequence is GDNF family receptor alpha-1 (468 aa).

Positions methionine 1 to glycine 24 are cleaved as a signal peptide. 3 consecutive repeat copies span residues aspartate 25–asparagine 113, lysine 150–arginine 238, and glutamate 239–isoleucine 342. Cysteine 36 and cysteine 42 form a disulfide bridge. A glycan (N-linked (GlcNAc...) asparagine) is linked at asparagine 59. Cystine bridges form between cysteine 154-cysteine 214, cysteine 161-cysteine 167, cysteine 178-cysteine 192, cysteine 187-cysteine 233, cysteine 216-cysteine 221, cysteine 243-cysteine 313, cysteine 250-cysteine 256, cysteine 267-cysteine 285, cysteine 277-cysteine 337, and cysteine 315-cysteine 325. N-linked (GlcNAc...) asparagine glycans are attached at residues asparagine 347 and asparagine 406. Serine 430 carries the GPI-anchor amidated serine lipid modification. The propeptide at histidine 431 to serine 468 is removed in mature form.

This sequence belongs to the GDNFR family. In terms of assembly, interacts with GDNF ligand and RET: forms a 2:2:2 ternary complex composed of GDNF ligand, GFRA1 and RET receptor. Interacts with SORL1, either alone or in complex with GDNF. Interaction between SORL1 and GFRA1 leads to GFRA1 internalization, but not degradation. In terms of tissue distribution, expressed in liver, brain, kidney and cochlea.

It localises to the cell membrane. It is found in the golgi apparatus. The protein resides in the trans-Golgi network. Its subcellular location is the endosome. The protein localises to the multivesicular body. Functionally, coreceptor for GDNF, a neurotrophic factor that enhances survival and morphological differentiation of dopaminergic neurons and increases their high-affinity dopamine uptake. GDNF-binding leads to autophosphorylation and activation of the RET receptor. The polypeptide is GDNF family receptor alpha-1 (Gfra1) (Rattus norvegicus (Rat)).